A 260-amino-acid polypeptide reads, in one-letter code: Pectate lyase H (260 aa).

The N-terminal stretch at 1 to 17 (MFIKNGLLLSLATSVLA) is a signal peptide.

It belongs to the polysaccharide lyase 3 family. It depends on Ca(2+) as a cofactor.

The protein resides in the secreted. It carries out the reaction Eliminative cleavage of (1-&gt;4)-alpha-D-galacturonan to give oligosaccharides with 4-deoxy-alpha-D-galact-4-enuronosyl groups at their non-reducing ends.. Functionally, pectinolytic enzyme consist of four classes of enzymes: pectin lyase, polygalacturonase, pectin methylesterase and rhamnogalacturonase. Among pectinolytic enzymes, pectin lyase is the most important in depolymerization of pectin, since it cleaves internal glycosidic bonds of highly methylated pectins. Favors pectate, the anion, over pectin, the methyl ester. This chain is Pectate lyase H (plyH), found in Emericella nidulans (strain FGSC A4 / ATCC 38163 / CBS 112.46 / NRRL 194 / M139) (Aspergillus nidulans).